Reading from the N-terminus, the 210-residue chain is DNA-directed RNA polymerase subunit 5-like protein 1 (210 aa).

The protein belongs to the archaeal Rpo5/eukaryotic RPB5 RNA polymerase subunit family.

Its subcellular location is the nucleus. The sequence is that of DNA-directed RNA polymerase subunit 5-like protein 1 (NRPB5L1) from Arabidopsis thaliana (Mouse-ear cress).